The following is a 321-amino-acid chain: Biotin synthase (321 aa).

The 230-residue stretch at 45-274 (FHGNRVDLCS…GALIRLCGGR (230 aa)) folds into the Radical SAM core domain. Residues C63, C67, and C70 each contribute to the [4Fe-4S] cluster site. The [2Fe-2S] cluster site is built by C139, C199, and R269.

This sequence belongs to the radical SAM superfamily. Biotin synthase family. In terms of assembly, homodimer. Requires [4Fe-4S] cluster as cofactor. The cofactor is [2Fe-2S] cluster.

It catalyses the reaction (4R,5S)-dethiobiotin + (sulfur carrier)-SH + 2 reduced [2Fe-2S]-[ferredoxin] + 2 S-adenosyl-L-methionine = (sulfur carrier)-H + biotin + 2 5'-deoxyadenosine + 2 L-methionine + 2 oxidized [2Fe-2S]-[ferredoxin]. The protein operates within cofactor biosynthesis; biotin biosynthesis; biotin from 7,8-diaminononanoate: step 2/2. Functionally, catalyzes the conversion of dethiobiotin (DTB) to biotin by the insertion of a sulfur atom into dethiobiotin via a radical-based mechanism. The chain is Biotin synthase from Pelotomaculum thermopropionicum (strain DSM 13744 / JCM 10971 / SI).